A 400-amino-acid polypeptide reads, in one-letter code: MRSLIAMYQRIGLVPLIIIGLVLGVLIGWLAPNVGIALGLLGTLFVGALKAVAPILVFVLVMAAISQHRSGNEVYVKPVLIMYMFGTFLAALTAVGASFLFPTELVLVNAVIEQVPPANLKEVLTNLLMNLVANPVQAIAEANYIGILAWAIIIGFALRQASDTARTVVGDFSDAISQVVKWVIALAPFGILGLVANTVAETGFEALAGYARILMVLVGCMLFIALVVNPLIILVKTGKNPYPLVFICLRESGITAFFTRSSAANIPVNMNLARKLGLHEDTYSVTIPLGATINMAGAAITINVLTLAAAHTLGIEVTFASALLLSLVATISACGASGVAGGSLLLIPLAASLFSIPNDIAMQVVAIGFIIGVIQDSAETALNSSTDVLFTAAADPKYAR.

The next 10 membrane-spanning stretches (helical) occupy residues I11 to A31, F45 to I65, I81 to F101, A138 to L158, A175 to V195, I213 to I233, Y242 to A264, M295 to I315, L327 to I347, and F354 to I374.

This sequence belongs to the dicarboxylate/amino acid:cation symporter (DAACS) (TC 2.A.23) family.

It localises to the cell inner membrane. The enzyme catalyses L-serine(in) + Na(+)(in) = L-serine(out) + Na(+)(out). The catalysed reaction is L-threonine(in) + Na(+)(in) = L-threonine(out) + Na(+)(out). Its function is as follows. Involved in the import of serine and threonine into the cell, with the concomitant import of sodium (symport system). The protein is Serine/threonine transporter SstT of Psychrobacter cryohalolentis (strain ATCC BAA-1226 / DSM 17306 / VKM B-2378 / K5).